We begin with the raw amino-acid sequence, 201 residues long: Urease accessory protein UreG (201 aa).

Residue 11–18 coordinates GTP; the sequence is GPVGSGKT.

The protein belongs to the SIMIBI class G3E GTPase family. UreG subfamily. Homodimer. UreD, UreF and UreG form a complex that acts as a GTP-hydrolysis-dependent molecular chaperone, activating the urease apoprotein by helping to assemble the nickel containing metallocenter of UreC. The UreE protein probably delivers the nickel.

It localises to the cytoplasm. In terms of biological role, facilitates the functional incorporation of the urease nickel metallocenter. This process requires GTP hydrolysis, probably effectuated by UreG. This Synechococcus sp. (strain CC9902) protein is Urease accessory protein UreG.